The chain runs to 157 residues: Dihydrofolate reductase type 5 (157 aa).

Positions 2-156 constitute a DHFR domain; that stretch reads KVSLMAAKAK…INYCYQIWQK (155 aa).

This sequence belongs to the dihydrofolate reductase family. As to quaternary structure, homodimer.

The enzyme catalyses (6S)-5,6,7,8-tetrahydrofolate + NADP(+) = 7,8-dihydrofolate + NADPH + H(+). It participates in cofactor biosynthesis; tetrahydrofolate biosynthesis; 5,6,7,8-tetrahydrofolate from 7,8-dihydrofolate: step 1/1. Functionally, key enzyme in folate metabolism. Catalyzes an essential reaction for de novo glycine and purine synthesis, and for DNA precursor synthesis. This is Dihydrofolate reductase type 5 (dhfrV) from Escherichia coli.